The sequence spans 279 residues: Apolipoprotein L domain-containing protein 1 (279 aa).

A run of 3 helical transmembrane segments spans residues 83-105 (SLVA…IVGL), 122-142 (GLGV…SLIF), and 192-212 (IALY…FLIP). Residues 226–253 (LKAKIQKLAESLESCTGALDELSEQLES) adopt a coiled-coil conformation.

This sequence belongs to the apolipoprotein L family. Expressed in neonatal dermal microvascular endothelial cells.

Its subcellular location is the cell membrane. The protein resides in the cell junction. It localises to the cytoplasmic vesicle. The protein localises to the secretory vesicle. Functionally, is a modulator of endothelial barrier permeability, required for proper organization of endothelial cell-cell junctions and cytoskeleton. It also plays a role in the modulation of secretory autophagy. May affect blood-brain barrier permeability. The polypeptide is Apolipoprotein L domain-containing protein 1 (APOLD1) (Homo sapiens (Human)).